The following is a 344-amino-acid chain: MMVIRPVERSDVSALMQLASKTGGGLTSLPANEATLSARIERAIKTWQGELPKSEQGYVFVLEDSETGTVAGICAIEVAVGLNDPWHNYRVGTLVHASKELNVYNALPTLFLSNDHTGSSELCTLFLDPDWRKEGNGYLLSKSRFMFMAAFRDKFNDKVVAEMRGVIDEHGYSPFWQSLGKRFFSMDFSRADFLCGTGQKAFIAELMPKHPIYTHFLSQEAQDVIGQVHPQTAPARAVLEKEGFRYRNYIDIFDGGPTLECDIDRVRAIRKSRLVEVAEGQPAQGDFPACLVANENYHHFRVVLARTDPATERLILTAAQLDALKCHAGERVRLVRLCAVEKTA.

L125 contributes to the succinyl-CoA binding site. Residue H229 is the Proton donor of the active site.

The protein belongs to the arginine N-succinyltransferase family.

The catalysed reaction is succinyl-CoA + L-arginine = N(2)-succinyl-L-arginine + CoA + H(+). The protein operates within amino-acid degradation; L-arginine degradation via AST pathway; L-glutamate and succinate from L-arginine: step 1/5. In terms of biological role, catalyzes the transfer of succinyl-CoA to arginine to produce N(2)-succinylarginine. The sequence is that of Arginine N-succinyltransferase from Shigella boydii serotype 18 (strain CDC 3083-94 / BS512).